A 156-amino-acid chain; its full sequence is Cyclic pyranopterin monophosphate synthase (156 aa).

Residues 73-75 and 110-111 each bind substrate; these read LCH and ME. The active site involves Asp-125.

Belongs to the MoaC family. In terms of assembly, homohexamer; trimer of dimers.

It catalyses the reaction (8S)-3',8-cyclo-7,8-dihydroguanosine 5'-triphosphate = cyclic pyranopterin phosphate + diphosphate. The protein operates within cofactor biosynthesis; molybdopterin biosynthesis. Catalyzes the conversion of (8S)-3',8-cyclo-7,8-dihydroguanosine 5'-triphosphate to cyclic pyranopterin monophosphate (cPMP). This Pseudomonas entomophila (strain L48) protein is Cyclic pyranopterin monophosphate synthase.